A 252-amino-acid polypeptide reads, in one-letter code: Ubiquinone/menaquinone biosynthesis C-methyltransferase UbiE (252 aa).

Residues Thr-75, Asp-96, and 123–124 (NA) contribute to the S-adenosyl-L-methionine site.

It belongs to the class I-like SAM-binding methyltransferase superfamily. MenG/UbiE family.

The enzyme catalyses a 2-demethylmenaquinol + S-adenosyl-L-methionine = a menaquinol + S-adenosyl-L-homocysteine + H(+). The catalysed reaction is a 2-methoxy-6-(all-trans-polyprenyl)benzene-1,4-diol + S-adenosyl-L-methionine = a 5-methoxy-2-methyl-3-(all-trans-polyprenyl)benzene-1,4-diol + S-adenosyl-L-homocysteine + H(+). Its pathway is quinol/quinone metabolism; menaquinone biosynthesis; menaquinol from 1,4-dihydroxy-2-naphthoate: step 2/2. It functions in the pathway cofactor biosynthesis; ubiquinone biosynthesis. Functionally, methyltransferase required for the conversion of demethylmenaquinol (DMKH2) to menaquinol (MKH2) and the conversion of 2-polyprenyl-6-methoxy-1,4-benzoquinol (DDMQH2) to 2-polyprenyl-3-methyl-6-methoxy-1,4-benzoquinol (DMQH2). This Methylobacterium nodulans (strain LMG 21967 / CNCM I-2342 / ORS 2060) protein is Ubiquinone/menaquinone biosynthesis C-methyltransferase UbiE.